A 773-amino-acid polypeptide reads, in one-letter code: Leucine-rich repeat and calponin homology domain-containing protein 2 (773 aa).

The tract at residues 1–46 (MAASQGGGGNSGGGGCSGGGSGGGGGAAGGGGGGGGGGGGGAGAGG) is disordered. LRR repeat units follow at residues 97–118 (NSGI…GYDL), 120–141 (DTTQ…VWLF), 143–164 (PLET…IKNL), 166–187 (MLTY…LFDL), 188–209 (PLKV…IGKL), 211–232 (DLME…MGKL), 234–256 (SLKE…GDLP), 257–277 (LVKL…YRKL), and 279–300 (HLQV…ICLK). Disordered regions lie at residues 324–409 (LDLP…QKDQ), 438–478 (FLKG…LKEV), and 573–633 (KYKS…SRQE). Basic and acidic residues-rich tracts occupy residues 386–396 (SNREQTSRNDS) and 440–466 (KGKE…KEQL). A compositionally biased stretch (polar residues) spans 594–603 (AHMSAQSPVS). In terms of domain architecture, Calponin-homology (CH) spans 650–763 (LREEREQIRQ…VTVQALLELP (114 aa)).

In terms of biological role, may play a role in the organization of the cytoskeleton. The protein is Leucine-rich repeat and calponin homology domain-containing protein 2 (Lrch2) of Mus musculus (Mouse).